The sequence spans 478 residues: PRAME family member 11 (478 aa).

The LRR 1; degenerate repeat unit spans residues 99–126 (RWKLQVLDLQDVCENFWMVWSEAMAHGC). An LRR 2; degenerate repeat occupies 181 to 205 (HLCCKKLKILGMPFRNIRSILKMVN). An LRR 3; degenerate repeat occupies 206 to 232 (LDCIQEVEVNCKWILPILTQFTPYLGH). The stretch at 233–268 (LRNLQKLVLSHMDVSRYVSPEQKKEIVTQFTTQFLK) is one LRR 4; degenerate repeat. 5 LRR repeats span residues 269–294 (LRCL…LSCL), 295–326 (KTSL…SQLK), 327–347 (TLDL…QILL), 351–378 (AATL…ALSR), and 379–403 (CFEL…LLSH).

This sequence belongs to the PRAME family.

This Homo sapiens (Human) protein is PRAME family member 11.